The following is an 828-amino-acid chain: Glycerol-3-phosphate acyltransferase 1, mitochondrial (828 aa).

Residues 1–87 are Cytoplasmic-facing; the sequence is MEESSVTIGT…FFNPSIPSLG (87 aa). Residues 80-120 form an important for mitochondrial localization region; sequence NPSIPSLGLRNVIYINETHTRHRGWLARRLSYILFVQERDV. The stretch at 88-118 is an intramembrane region; it reads LRNVIYINETHTRHRGWLARRLSYILFVQER. Over 119-828 the chain is Cytoplasmic; sequence DVHKGMFATS…LEYILSFVVL (710 aa). An HXXXXD motif motif is present at residues 230–235; the sequence is HRSHID. CoA-binding residues include arginine 278, arginine 279, lysine 288, arginine 293, and arginine 328. Serine 380 bears the Phosphoserine mark. Arginine 462 is a binding site for CoA. Residues serine 688 and serine 695 each carry the phosphoserine modification. Residues lysine 780 and lysine 784 each carry the N6-acetyllysine modification.

It belongs to the GPAT/DAPAT family.

The protein resides in the mitochondrion outer membrane. The catalysed reaction is sn-glycerol 3-phosphate + an acyl-CoA = a 1-acyl-sn-glycero-3-phosphate + CoA. It carries out the reaction sn-glycerol 3-phosphate + hexadecanoyl-CoA = 1-hexadecanoyl-sn-glycero-3-phosphate + CoA. The enzyme catalyses (9Z,12Z)-octadecadienoyl-CoA + sn-glycerol 3-phosphate = 1-(9Z,12Z)-octadecadienoyl-sn-glycero-3-phosphate + CoA. It catalyses the reaction sn-glycerol 3-phosphate + (9Z)-octadecenoyl-CoA = 1-(9Z-octadecenoyl)-sn-glycero-3-phosphate + CoA. The catalysed reaction is sn-glycerol 3-phosphate + octadecanoyl-CoA = 1-octadecanoyl-sn-glycero-3-phosphate + CoA. It carries out the reaction dodecanoyl-CoA + sn-glycerol 3-phosphate = 1-dodecanoyl-sn-glycerol 3-phosphate + CoA. The enzyme catalyses 1-acyl-sn-glycero-3-phospho-(1'-sn-glycerol) + an acyl-CoA = a 1,2-diacyl-sn-glycero-3-phospho-(1'-sn-glycerol) + CoA. It functions in the pathway phospholipid metabolism; CDP-diacylglycerol biosynthesis; CDP-diacylglycerol from sn-glycerol 3-phosphate: step 1/3. In terms of biological role, mitochondrial membrane protein that catalyzes the essential first step of biosynthesis of glycerolipids such as triglycerides, phosphatidic acids and lysophosphatidic acids. Esterifies acyl-group from acyl-coenzyme A (acyl-CoA) to the sn-1 position of glycerol-3-phosphate, to produce lysophosphatidic acid. Has a narrow hydrophobic binding cleft that selects for a linear acyl chain. Catalytic activity is higher for substrates with a 16-carbon acyl chain. In Rattus norvegicus (Rat), this protein is Glycerol-3-phosphate acyltransferase 1, mitochondrial.